Here is a 300-residue protein sequence, read N- to C-terminus: FeMo cofactor biosynthesis protein NifB (300 aa).

A Radical SAM core domain is found at 24–266; it reads HDKVGRVHLP…PQFRACGQCR (243 aa). 3 residues coordinate [4Fe-4S] cluster: Cys38, Cys42, and Cys45. Residues Gly93, Thr144, and Ile196 each coordinate S-adenosyl-L-methionine. Cys262 and Cys265 together coordinate [4Fe-4S] cluster.

The protein belongs to the radical SAM superfamily. NifB family. In terms of assembly, monomer. It depends on [4Fe-4S] cluster as a cofactor.

The protein operates within cofactor biosynthesis; Fe-Mo cofactor biosynthesis. In terms of biological role, involved in the biosynthesis of the iron-molybdenum cofactor (FeMo-co or M-cluster) found in the dinitrogenase enzyme of the nitrogenase complex in nitrogen-fixing microorganisms. NifB catalyzes the crucial step of radical SAM-dependent carbide insertion that occurs concomitant with the insertion of a 9th sulfur and the rearrangement/coupling of two [4Fe-4S] clusters into a [8Fe-9S-C] cluster, the precursor to the M-cluster. This is FeMo cofactor biosynthesis protein NifB from Methanocaldococcus jannaschii (strain ATCC 43067 / DSM 2661 / JAL-1 / JCM 10045 / NBRC 100440) (Methanococcus jannaschii).